A 439-amino-acid chain; its full sequence is Tol-Pal system protein TolB (439 aa).

An N-terminal signal peptide occupies residues 1-22 (MKKPLRWLAALTALLLPLSALA).

This sequence belongs to the TolB family. The Tol-Pal system is composed of five core proteins: the inner membrane proteins TolA, TolQ and TolR, the periplasmic protein TolB and the outer membrane protein Pal. They form a network linking the inner and outer membranes and the peptidoglycan layer.

The protein localises to the periplasm. Part of the Tol-Pal system, which plays a role in outer membrane invagination during cell division and is important for maintaining outer membrane integrity. This is Tol-Pal system protein TolB from Xanthomonas axonopodis pv. citri (strain 306).